A 589-amino-acid chain; its full sequence is Aspartate--tRNA(Asp/Asn) ligase (589 aa).

Glutamate 175 serves as a coordination point for L-aspartate. Residues glutamine 199 to lysine 202 are aspartate. Residue arginine 221 participates in L-aspartate binding. ATP-binding positions include arginine 221–glutamate 223 and glutamine 230. Histidine 451 contacts L-aspartate. Residue glutamate 485 coordinates ATP. An L-aspartate-binding site is contributed by arginine 492. Glycine 537 to arginine 540 serves as a coordination point for ATP.

The protein belongs to the class-II aminoacyl-tRNA synthetase family. Type 1 subfamily. As to quaternary structure, homodimer.

Its subcellular location is the cytoplasm. The catalysed reaction is tRNA(Asx) + L-aspartate + ATP = L-aspartyl-tRNA(Asx) + AMP + diphosphate. Aspartyl-tRNA synthetase with relaxed tRNA specificity since it is able to aspartylate not only its cognate tRNA(Asp) but also tRNA(Asn). Reaction proceeds in two steps: L-aspartate is first activated by ATP to form Asp-AMP and then transferred to the acceptor end of tRNA(Asp/Asn). The polypeptide is Aspartate--tRNA(Asp/Asn) ligase (Roseiflexus sp. (strain RS-1)).